The chain runs to 342 residues: Eukaryotic translation initiation factor 3 subunit F (342 aa).

The 137-residue stretch at 30 to 166 (VAIQPQAVFS…SRTYISAPIG (137 aa)) folds into the MPN domain. The segment at 310–342 (TDALAGDGQKDGGDRKQGGDRRNKGRQQRTQEA) is disordered. Residues 317-331 (GQKDGGDRKQGGDRR) are compositionally biased toward basic and acidic residues.

This sequence belongs to the eIF-3 subunit F family. Component of the eukaryotic translation initiation factor 3 (eIF-3) complex.

It is found in the cytoplasm. In terms of biological role, component of the eukaryotic translation initiation factor 3 (eIF-3) complex, which is involved in protein synthesis of a specialized repertoire of mRNAs and, together with other initiation factors, stimulates binding of mRNA and methionyl-tRNAi to the 40S ribosome. The eIF-3 complex specifically targets and initiates translation of a subset of mRNAs involved in cell proliferation. The polypeptide is Eukaryotic translation initiation factor 3 subunit F (Phaeosphaeria nodorum (strain SN15 / ATCC MYA-4574 / FGSC 10173) (Glume blotch fungus)).